The chain runs to 85 residues: Small ribosomal subunit protein eS27 (85 aa).

The C4-type zinc finger occupies 38 to 60 (CHGCRTITTVFSHAQNVVICSSC).

Belongs to the eukaryotic ribosomal protein eS27 family. Requires Zn(2+) as cofactor.

The chain is Small ribosomal subunit protein eS27 (rps27) from Dictyostelium discoideum (Social amoeba).